The primary structure comprises 31 residues: Conserved oligomeric Golgi complex subunit 5 (31 aa).

Belongs to the COG5 family. Component of the conserved oligomeric Golgi complex which is composed of eight different subunits and is required for normal Golgi morphology and localization.

Its subcellular location is the cytoplasm. It is found in the cytosol. The protein resides in the golgi apparatus membrane. In terms of biological role, required for normal Golgi function. This is Conserved oligomeric Golgi complex subunit 5 (COG5) from Bos taurus (Bovine).